The sequence spans 347 residues: GMP reductase (347 aa).

NADP(+) is bound at residue 108 to 131; it reads ADFEKTKQILDLNPALNFVCIDVA. K(+) is bound by residues Gly181 and Gly183. Residue Cys186 is the Thioimidate intermediate of the active site. 216-239 lines the NADP(+) pocket; that stretch reads IVSDGGCTTPGDVAKAFGGGADFV.

Belongs to the IMPDH/GMPR family. GuaC type 1 subfamily. Homotetramer.

The enzyme catalyses IMP + NH4(+) + NADP(+) = GMP + NADPH + 2 H(+). Catalyzes the irreversible NADPH-dependent deamination of GMP to IMP. It functions in the conversion of nucleobase, nucleoside and nucleotide derivatives of G to A nucleotides, and in maintaining the intracellular balance of A and G nucleotides. This is GMP reductase from Shigella boydii serotype 18 (strain CDC 3083-94 / BS512).